A 247-amino-acid polypeptide reads, in one-letter code: Uridylate kinase (247 aa).

14-17 (KLSG) is a binding site for ATP. Positions 22–27 (GERGVG) are involved in allosteric activation by GTP. Residue Gly-56 participates in UMP binding. ATP-binding residues include Gly-57 and Arg-61. Residues Asp-76 and 137–144 (IGSPYFST) each bind UMP. ATP-binding residues include Asn-165, Tyr-171, and Asp-174.

The protein belongs to the UMP kinase family. As to quaternary structure, homohexamer.

The protein localises to the cytoplasm. It carries out the reaction UMP + ATP = UDP + ADP. Its pathway is pyrimidine metabolism; CTP biosynthesis via de novo pathway; UDP from UMP (UMPK route): step 1/1. Allosterically activated by GTP. Inhibited by UTP, 5-bromo-UTP and 5-iodo-UTP. In terms of biological role, catalyzes the reversible phosphorylation of UMP to UDP, with ATP as the most efficient phosphate donor. The polypeptide is Uridylate kinase (pyrH) (Streptococcus pneumoniae serotype 4 (strain ATCC BAA-334 / TIGR4)).